The chain runs to 58 residues: Potassium channel toxin alpha-KTx BmKcug1a (58 aa).

The first 21 residues, 1–21 (MKISFLLLLAIVICSIGWTEA), serve as a signal peptide directing secretion. Pyrrolidone carboxylic acid is present on Gln-22. 3 disulfides stabilise this stretch: Cys-28–Cys-49, Cys-34–Cys-54, and Cys-38–Cys-56.

It belongs to the short scorpion toxin superfamily. Potassium channel inhibitor family. Alpha-KTx 01 subfamily. As to expression, expressed by the venom gland.

The protein localises to the secreted. Its function is as follows. Potent blocker of both large-conductance calcium-activated potassium channels (KCa1.1/KCNMA1) and voltage-gated potassium channels (Kv1.3/KCNA3 and ERG1/Kv11.1/KCNH2). The protein is Potassium channel toxin alpha-KTx BmKcug1a of Olivierus martensii (Manchurian scorpion).